Reading from the N-terminus, the 254-residue chain is Cytochrome c oxidase subunit 2 (254 aa).

Topologically, residues 1 to 37 are mitochondrial intermembrane; that stretch reads MNNILNFYPAVITTDVAENWQIGFQDPATPIMEGIIN. The helical transmembrane segment at 38–58 threads the bilayer; it reads LHYDLMFFICVISVFVSWMLG. Over 59–83 the chain is Mitochondrial matrix; sequence RTLWHFEQNQNKIPSSLTHGTLIEM. The helical transmembrane segment at 84-104 threads the bilayer; it reads IWTVTPAFILLIIAVPSFSLL. Over 105 to 254 the chain is Mitochondrial intermembrane; the sequence is YAMDEIISPA…VSWISNKLNE (150 aa). 6 residues coordinate Cu cation: H186, C221, E223, C225, H229, and M232. Mg(2+) is bound at residue E223.

It belongs to the cytochrome c oxidase subunit 2 family. Component of the cytochrome c oxidase (complex IV, CIV), a multisubunit enzyme composed of a catalytic core of 3 subunits and several supernumerary subunits. The complex exists as a monomer or a dimer and forms supercomplexes (SCs) in the inner mitochondrial membrane with ubiquinol-cytochrome c oxidoreductase (cytochrome b-c1 complex, complex III, CIII). Cu cation serves as cofactor.

It is found in the mitochondrion inner membrane. It carries out the reaction 4 Fe(II)-[cytochrome c] + O2 + 8 H(+)(in) = 4 Fe(III)-[cytochrome c] + 2 H2O + 4 H(+)(out). In terms of biological role, component of the cytochrome c oxidase, the last enzyme in the mitochondrial electron transport chain which drives oxidative phosphorylation. The respiratory chain contains 3 multisubunit complexes succinate dehydrogenase (complex II, CII), ubiquinol-cytochrome c oxidoreductase (cytochrome b-c1 complex, complex III, CIII) and cytochrome c oxidase (complex IV, CIV), that cooperate to transfer electrons derived from NADH and succinate to molecular oxygen, creating an electrochemical gradient over the inner membrane that drives transmembrane transport and the ATP synthase. Cytochrome c oxidase is the component of the respiratory chain that catalyzes the reduction of oxygen to water. Electrons originating from reduced cytochrome c in the intermembrane space (IMS) are transferred via the dinuclear copper A center (CU(A)) of subunit 2 and heme A of subunit 1 to the active site in subunit 1, a binuclear center (BNC) formed by heme A3 and copper B (CU(B)). The BNC reduces molecular oxygen to 2 water molecules using 4 electrons from cytochrome c in the IMS and 4 protons from the mitochondrial matrix. This Chondrus crispus (Carrageen Irish moss) protein is Cytochrome c oxidase subunit 2 (COX2).